A 249-amino-acid polypeptide reads, in one-letter code: tRNA pseudouridine synthase A (249 aa).

D52 serves as the catalytic Nucleophile. Y110 is a substrate binding site.

This sequence belongs to the tRNA pseudouridine synthase TruA family. In terms of assembly, homodimer.

It catalyses the reaction uridine(38/39/40) in tRNA = pseudouridine(38/39/40) in tRNA. Functionally, formation of pseudouridine at positions 38, 39 and 40 in the anticodon stem and loop of transfer RNAs. This chain is tRNA pseudouridine synthase A, found in Syntrophomonas wolfei subsp. wolfei (strain DSM 2245B / Goettingen).